Reading from the N-terminus, the 94-residue chain is Small ribosomal subunit protein uS19 (94 aa).

Belongs to the universal ribosomal protein uS19 family.

Its function is as follows. Protein S19 forms a complex with S13 that binds strongly to the 16S ribosomal RNA. The chain is Small ribosomal subunit protein uS19 from Desulforudis audaxviator (strain MP104C).